Consider the following 480-residue polypeptide: Ribulose bisphosphate carboxylase large chain (480 aa).

Residues 1–2 (MS) constitute a propeptide that is removed on maturation. N-acetylproline is present on Pro3. Lys14 is subject to N6,N6,N6-trimethyllysine. Positions 123 and 173 each coordinate substrate. Catalysis depends on Lys175, which acts as the Proton acceptor. Lys177 lines the substrate pocket. Residues Lys201, Asp203, and Glu204 each contribute to the Mg(2+) site. Lys201 carries the N6-carboxylysine modification. His294 functions as the Proton acceptor in the catalytic mechanism. Residues Arg295, His327, and Ser379 each coordinate substrate.

It belongs to the RuBisCO large chain family. Type I subfamily. Heterohexadecamer of 8 large chains and 8 small chains; disulfide-linked. The disulfide link is formed within the large subunit homodimers. It depends on Mg(2+) as a cofactor. In terms of processing, the disulfide bond which can form in the large chain dimeric partners within the hexadecamer appears to be associated with oxidative stress and protein turnover.

The protein localises to the plastid. It is found in the chloroplast. It carries out the reaction 2 (2R)-3-phosphoglycerate + 2 H(+) = D-ribulose 1,5-bisphosphate + CO2 + H2O. The enzyme catalyses D-ribulose 1,5-bisphosphate + O2 = 2-phosphoglycolate + (2R)-3-phosphoglycerate + 2 H(+). In terms of biological role, ruBisCO catalyzes two reactions: the carboxylation of D-ribulose 1,5-bisphosphate, the primary event in carbon dioxide fixation, as well as the oxidative fragmentation of the pentose substrate in the photorespiration process. Both reactions occur simultaneously and in competition at the same active site. The chain is Ribulose bisphosphate carboxylase large chain from Alluaudia procera (Madagascan ocotillo).